Consider the following 2727-residue polypeptide: E3 ubiquitin-protein ligase Ufd4 (2727 aa).

Disordered regions lie at residues threonine 247–aspartate 271 and arginine 365–threonine 389. A compositionally biased stretch (polar residues) spans arginine 365–glutamine 374. ANK repeat units lie at residues valine 422 to lysine 451, glutamine 453 to leucine 482, and aspartate 486 to proline 518. The disordered stretch occupies residues alanine 682–glutamate 702. The region spanning glutamine 1322–glutamate 1392 is the MIB/HERC2 domain. Composition is skewed to polar residues over residues glutamine 1401–serine 1430 and lysine 1437–threonine 1448. Disordered regions lie at residues glutamine 1401–threonine 1448, asparagine 1483–proline 1512, glutamate 1570–aspartate 1592, tyrosine 1845–alanine 1871, alanine 1905–glutamate 1930, and serine 2092–leucine 2115. Positions serine 1575–aspartate 1592 are enriched in low complexity. A compositionally biased stretch (acidic residues) spans aspartate 1909–glutamate 1930. Residues proline 2104–leucine 2115 are compositionally biased toward polar residues. The HECT domain maps to arginine 2289–asparagine 2727. The active-site Glycyl thioester intermediate is cysteine 2696.

Belongs to the UPL family. K-HECT subfamily.

It carries out the reaction S-ubiquitinyl-[E2 ubiquitin-conjugating enzyme]-L-cysteine + [acceptor protein]-L-lysine = [E2 ubiquitin-conjugating enzyme]-L-cysteine + N(6)-ubiquitinyl-[acceptor protein]-L-lysine.. It participates in protein modification; protein ubiquitination. In terms of biological role, E3 ubiquitin-protein ligase which accepts ubiquitin from an E2 ubiquitin-conjugating enzyme in the form of a thioester and then directly transfers the ubiquitin to targeted substrates. Involved in the negative regulation of the Ras/MAPK signaling pathway in the wing by acting with the E2 enzyme Unc6 and the putative E3 ligases poe and Kcmf1 to mediate the ubiquitination and proteasomal degradation of rl/MAPK. The polypeptide is E3 ubiquitin-protein ligase Ufd4 (Drosophila melanogaster (Fruit fly)).